Here is a 325-residue protein sequence, read N- to C-terminus: Chain length determinant protein (325 aa).

The Cytoplasmic segment spans residues 1–31; the sequence is MRVENNNVSGQNHDPEQIDLIDLLVQLWRGK. The helical transmembrane segment at 32–52 threads the bilayer; sequence MTIIISVIVAIALAIGYLAVA. At 53–294 the chain is on the periplasmic side; the sequence is KEKWTSTAII…LPIRRDSPKK (242 aa). A helical transmembrane segment spans residues 295–315; sequence AITLILAVLLGGMVGAGIVLG. The Cytoplasmic portion of the chain corresponds to 316–325; it reads RNALRNYNAK.

It belongs to the WzzB/Cld/Rol family.

It localises to the cell inner membrane. It participates in bacterial outer membrane biogenesis; lipopolysaccharide biosynthesis. In terms of biological role, confers a modal distribution of chain length on the O-antigen component of lipopolysaccharide (LPS). Gives rise to a reduced number of short chain molecules and increases in numbers of longer molecules, with a modal value of 13 (in strain O111/M92) and of 17 (in strain K12). In Escherichia coli, this protein is Chain length determinant protein (wzzB).